The primary structure comprises 556 residues: MKLLTNIGTLLALSPVQQVSATPHTGEHYNLVKLEGYGSVSGTTVNSTLTKKDLPTTVDAWMGIDYALQPTGHRRFKAAEWPKPFKGVKRADSYGKTCIQEIASKTPLESQSEACLNFNVFRTKGVPLSKKLPVLVWIHGGAFFSGSWASFDGAAFAASSKEPIVVVNFHYRVNSLGFLPSKLFKDEGLSNLGIRDQRLLFEFVQKHIGAFGGDKNAVTIGGRSAGGHSVGIHYFHNYGKDNKALFAQAIHQSGSVTSRAFPNDTYPLYKTQYDEYTAYLGCDNKKTNKATLKCLREADIDSIRNISTKIFYDYNDVLTWPFQPVQGGPLFEKPGSQSGYDGTFYHVPTITSNVNDEGKFYTPGNLETDSEFLDYLHNISPALTKKDLSELSALYPDPAKYDNSPFANSPNSTQYNRISAAWSDYAYICPGQETAYRASTAGVPTWKVRFNTNNSFPAWQGIPHTADTSYTWNGESTQYPEISHIYHGYLSSFVTAGNPNSHRYPGSPEWPAYHGDDESPLQIVVQPGDTKVEKDEIRKEACLWWRDPERAPRLNK.

Positions 1–21 are cleaved as a signal peptide; sequence MKLLTNIGTLLALSPVQQVSA. 5 N-linked (GlcNAc...) asparagine glycosylation sites follow: N46, N263, N305, N411, and N453.

It belongs to the type-B carboxylesterase/lipase family.

The protein localises to the secreted. The catalysed reaction is a carboxylic ester + H2O = an alcohol + a carboxylate + H(+). Functionally, secreted lipase involved in plant virulence. Has a substrate preference for p-nitrophenyl esters with a carbon chain length of C12 (p-nitrophenyl laureate). The protein is Secreted lipase 4 of Gibberella zeae (strain ATCC MYA-4620 / CBS 123657 / FGSC 9075 / NRRL 31084 / PH-1) (Wheat head blight fungus).